We begin with the raw amino-acid sequence, 62 residues long: uncharacterized protein (62 aa).

Residues 38–62 (VKSESDTADSKRSAEAKADEAPAKM) form a disordered region.

This is an uncharacterized protein from Schizosaccharomyces pombe (strain 972 / ATCC 24843) (Fission yeast).